The chain runs to 129 residues: Protein HMF1 (129 aa).

A Glycyl lysine isopeptide (Lys-Gly) (interchain with G-Cter in ubiquitin) cross-link involves residue K52.

The protein belongs to the RutC family.

It localises to the cytoplasm. The protein localises to the nucleus. It is found in the mitochondrion intermembrane space. This chain is Protein HMF1 (HMF1), found in Saccharomyces cerevisiae (strain ATCC 204508 / S288c) (Baker's yeast).